The chain runs to 144 residues: Small ribosomal subunit protein eS12y (144 aa).

An N-acetylserine modification is found at Ser-2.

It belongs to the eukaryotic ribosomal protein eS12 family.

The protein is Small ribosomal subunit protein eS12y (RPS12C) of Arabidopsis thaliana (Mouse-ear cress).